We begin with the raw amino-acid sequence, 147 residues long: Transcriptional regulator MraZ (147 aa).

2 consecutive SpoVT-AbrB domains span residues 5–52 (SHAI…PETE) and 81–124 (ATTL…SEEA).

This sequence belongs to the MraZ family. Forms oligomers.

The protein resides in the cytoplasm. It is found in the nucleoid. This is Transcriptional regulator MraZ from Saccharophagus degradans (strain 2-40 / ATCC 43961 / DSM 17024).